The primary structure comprises 128 residues: Small ribosomal subunit protein bS6 (128 aa).

This sequence belongs to the bacterial ribosomal protein bS6 family.

Its function is as follows. Binds together with bS18 to 16S ribosomal RNA. The sequence is that of Small ribosomal subunit protein bS6 from Nitratiruptor sp. (strain SB155-2).